A 176-amino-acid polypeptide reads, in one-letter code: ATP-dependent protease subunit HslV (176 aa).

Residue Thr5 is part of the active site. 3 residues coordinate Na(+): Ser161, Cys164, and Thr167.

It belongs to the peptidase T1B family. HslV subfamily. A double ring-shaped homohexamer of HslV is capped on each side by a ring-shaped HslU homohexamer. The assembly of the HslU/HslV complex is dependent on binding of ATP.

The protein resides in the cytoplasm. The catalysed reaction is ATP-dependent cleavage of peptide bonds with broad specificity.. With respect to regulation, allosterically activated by HslU binding. Protease subunit of a proteasome-like degradation complex believed to be a general protein degrading machinery. The chain is ATP-dependent protease subunit HslV from Thermoanaerobacter sp. (strain X514).